The primary structure comprises 396 residues: Mevalonate kinase (396 aa).

ATP contacts are provided by residues lysine 13, asparagine 55, serine 135, and 140-146 (GAGLGSS). The active-site Proton donor is serine 146. Serine 146 and glutamate 193 together coordinate Mg(2+). The Proton acceptor role is filled by aspartate 204.

Belongs to the GHMP kinase family. Mevalonate kinase subfamily. In terms of assembly, homodimer. Mg(2+) is required as a cofactor.

The protein resides in the cytoplasm. It is found in the peroxisome. It carries out the reaction (R)-mevalonate + ATP = (R)-5-phosphomevalonate + ADP + H(+). It participates in isoprenoid biosynthesis; isopentenyl diphosphate biosynthesis via mevalonate pathway; isopentenyl diphosphate from (R)-mevalonate: step 1/3. Its activity is regulated as follows. Farnesyl pyrophosphate and geranyl pyrophosphate inhibit mevalonate kinase activity by binding competitively at the ATP-binding sites. In terms of biological role, catalyzes the phosphorylation of mevalonate to mevalonate 5-phosphate, a key step in isoprenoid and cholesterol biosynthesis. This is Mevalonate kinase from Bos taurus (Bovine).